The following is a 370-amino-acid chain: Neutral protease 2 homolog AFUB_070680 (370 aa).

A signal peptide spans 1 to 19 (MKVTILASAILALINGALA). Residues 20–172 (LPANTPTLDV…PQAIKLLDRR (153 aa)) constitute a propeptide that is removed on maturation. 2 disulfide bridges follow: C178–C250 and C257–C275. A Zn(2+)-binding site is contributed by H300. The active site involves E301. Residues H304 and D315 each coordinate Zn(2+).

Belongs to the peptidase M35 family. Zn(2+) serves as cofactor.

It localises to the secreted. The enzyme catalyses Preferential cleavage of bonds with hydrophobic residues in P1'. Also 3-Asn-|-Gln-4 and 8-Gly-|-Ser-9 bonds in insulin B chain.. In terms of biological role, secreted metalloproteinase that allows assimilation of proteinaceous substrates. Shows high activities on basic nuclear substrates such as histone and protamine. May be involved in virulence. In Aspergillus fumigatus (strain CBS 144.89 / FGSC A1163 / CEA10) (Neosartorya fumigata), this protein is Neutral protease 2 homolog AFUB_070680.